The primary structure comprises 408 residues: Sprouty-related, EVH1 domain-containing protein 3 (408 aa).

A WH1 domain is found at 1-113; the sequence is MVRVRAVVMA…KSLLAALAAL (113 aa). Residues 118–226 form a disordered region; it reads LTPSSSSSSS…YEDYRRSGPP (109 aa). Over residues 120–130 the composition is skewed to low complexity; the sequence is PSSSSSSSSPS. A KBD domain is found at 192–242; it reads LPFTGIPEPSESLAGAGSQGWGSRGYEDYRRSGPPPPPLALSTCVVRFAKT. R238 carries the post-translational modification Asymmetric dimethylarginine. R246 is modified (omega-N-methylarginine). Residues 256-286 are disordered; it reads LPAPLTEAAPPAPPARPPPGPGPTPAPAKAS. Positions 265-281 are enriched in pro residues; sequence PPAPPARPPPGPGPTPA. Residues 294–405 enclose the SPR domain; it reads RCVHCRALFR…CAGCGGRHEE (112 aa).

Interacts with palmitoyltransferase ZDHHC17/HIP14; the interaction leads to palmitoylation of SPRED3. In terms of processing, phosphorylated on tyrosine. Post-translationally, palmitoylated by ZDHHC17/HIP14. Ubiquitinated. As to expression, brain specific.

It is found in the cell membrane. Functionally, tyrosine kinase substrate that inhibits growth-factor-mediated activation of MAP kinase. Inhibits fibroblast growth factor (FGF)-induced retinal lens fiber differentiation, probably by inhibiting FGF-mediated phosphorylation of ERK1/2. Inhibits TGFB-induced epithelial-to-mesenchymal transition in lens epithelial cells. The protein is Sprouty-related, EVH1 domain-containing protein 3 (Spred3) of Mus musculus (Mouse).